Consider the following 368-residue polypeptide: Probable pectate lyase 4 (368 aa).

The signal sequence occupies residues 1–25 (MASLVVIVSLLLAAFASPLLETAHS). N27 carries an N-linked (GlcNAc...) asparagine glycan. Residues D167, D191, and D195 each contribute to the Ca(2+) site. Residue R247 is part of the active site.

It belongs to the polysaccharide lyase 1 family. Requires Ca(2+) as cofactor.

The catalysed reaction is Eliminative cleavage of (1-&gt;4)-alpha-D-galacturonan to give oligosaccharides with 4-deoxy-alpha-D-galact-4-enuronosyl groups at their non-reducing ends.. It functions in the pathway glycan metabolism; pectin degradation; 2-dehydro-3-deoxy-D-gluconate from pectin: step 2/5. This Arabidopsis thaliana (Mouse-ear cress) protein is Probable pectate lyase 4.